Reading from the N-terminus, the 549-residue chain is MSKRWALPLLLGIFLLAYLLPLGSHGLWIPDETRYAQISQEMLLSGNWVSPHFMNLRYFEKPAAGYWMIAIGQAVFGQNLFGVRFASALSTGLSVLLCFLIARRLWNEPRKSFVCALLYMSFVIVAGQAGYANLDPQFTFWVNLSLVALWFALDSRANGQRLAGWAVLGLACGMGFMTKGFLAWLLPVLIALPWMLWQKRWKELLLYGPVAIAVAIIVSLPWALAVHGQEPDYWRFFFWHEHIRRFAGDDAQHDAPWWFYLPLLVAFSLPWVGMLPVAFKQAWQTRRETGIAFLGLWLLMPLLFFSLSNGKLPTYILPCLLPLALLLGHALADRLRLEQGRALGLNGLLNLLLGLVTLIGLVYVQLKRPLYDHELHSLVLVFIALTGWIISNLLQAFRPLQCWAAPAVGSLLLIALLPAALPRSVVANKMPDQFVLAHQKELTATTHLLSNDLGAASALSWRVKRPQVALYNTIGELKYGLAYPDGIQQRVDPDQVQQWMREARKTGSVGVVMRVKGQDELDELDRLPKDGVRYEQGNLVIMILPQEAS.

The next 12 membrane-spanning stretches (helical) occupy residues 9–29 (LLLG…GLWI), 80–102 (LFGV…FLIA), 112–132 (SFVC…AGYA), 133–153 (NLDP…WFAL), 176–196 (FMTK…PWML), 204–224 (LLLY…PWAL), 259–279 (FYLP…PVAF), 290–310 (GIAF…LSNG), 312–332 (LPTY…HALA), 342–362 (ALGL…IGLV), 377–397 (SLVL…LQAF), and 402–422 (CWAA…AALP).

The protein belongs to the glycosyltransferase 83 family.

It localises to the cell inner membrane. It carries out the reaction 4-amino-4-deoxy-alpha-L-arabinopyranosyl di-trans,octa-cis-undecaprenyl phosphate + lipid IVA = lipid IIA + di-trans,octa-cis-undecaprenyl phosphate.. The protein operates within lipopolysaccharide metabolism; 4-amino-4-deoxy-beta-L-arabinose-lipid A biosynthesis. Its function is as follows. Catalyzes the transfer of the L-Ara4N moiety of the glycolipid undecaprenyl phosphate-alpha-L-Ara4N to lipid A. The modified arabinose is attached to lipid A and is required for resistance to polymyxin and cationic antimicrobial peptides. The polypeptide is Undecaprenyl phosphate-alpha-4-amino-4-deoxy-L-arabinose arabinosyl transferase 2 (Pseudomonas fluorescens (strain Pf0-1)).